Reading from the N-terminus, the 213-residue chain is MEIESKFKRICVFCGSSAGNKVSYKDAAIELGTELVSRNIDLVYGGGSIGLMGLISQAVFNGGRHVIGVIPKTLMPREITGETVGEVKAVADMHQRKAEMAKHSDAFIALPGGYGTLEELLEVITWAQLGIHDKPVGLLNVEGYYNSLLSFIDKAVEEGFISPTARHIIVSAPSAKELVKKLEDYVPRHEKVASKKSWEMEQIGLSPTCEISR.

Residues Glu78, 96 to 97 (RK), 113 to 119 (GYGTLEE), and Thr125 contribute to the substrate site.

It belongs to the LOG family. In terms of tissue distribution, expressed in roots and shoots. Detected in the vascular tissues of roots, cotyledons, leaves and pistils, in the shoot apical meristem and in immature flowers.

It is found in the cytoplasm. Its subcellular location is the nucleus. The enzyme catalyses N(6)-(dimethylallyl)adenosine 5'-phosphate + H2O = N(6)-dimethylallyladenine + D-ribose 5-phosphate. The catalysed reaction is 9-ribosyl-trans-zeatin 5'-phosphate + H2O = trans-zeatin + D-ribose 5-phosphate. Its function is as follows. Cytokinin-activating enzyme working in the direct activation pathway. Phosphoribohydrolase that converts inactive cytokinin nucleotides to the biologically active free-base forms. The polypeptide is Cytokinin riboside 5'-monophosphate phosphoribohydrolase LOG1 (LOG1) (Arabidopsis thaliana (Mouse-ear cress)).